The following is a 642-amino-acid chain: Threonine--tRNA ligase (642 aa).

The region spanning 1–61 (MPVITLPDGS…DADATVAIIT (61 aa)) is the TGS domain. Residues 243–534 (DHRKIGKQLD…LTEEFAGFFP (292 aa)) form a catalytic region. 3 residues coordinate Zn(2+): cysteine 334, histidine 385, and histidine 511.

It belongs to the class-II aminoacyl-tRNA synthetase family. Homodimer. It depends on Zn(2+) as a cofactor.

It localises to the cytoplasm. The catalysed reaction is tRNA(Thr) + L-threonine + ATP = L-threonyl-tRNA(Thr) + AMP + diphosphate + H(+). Catalyzes the attachment of threonine to tRNA(Thr) in a two-step reaction: L-threonine is first activated by ATP to form Thr-AMP and then transferred to the acceptor end of tRNA(Thr). Also edits incorrectly charged L-seryl-tRNA(Thr). The polypeptide is Threonine--tRNA ligase (Edwardsiella ictaluri (strain 93-146)).